A 432-amino-acid polypeptide reads, in one-letter code: MGKNVVVLGTQWGDEGKGKVVDLLTERAKYVVRYQGGHNAGHTLVINGEKTVLHLIPSGILRENVVSIIGNGVVLAPDALMKEMTELEARGVPVRERLLLSEACPLILPYHVALDNAREKARGAKAIGTTGRGIGPAYEDKVARRGLRVGDLFDKETFAVKLKEIVEYHNFQLVNYYKADAVDYQKVLDDVLAIADILTAMVVDVSDLLYKAHLRGDFVMFEGAQGTLLDIDHGTYPYVTSSNTTAGGVATGSGLGPRYVDYVLGIVKAYSTRVGAGPFPTELFEEVGEHLSQKGNEFGATTGRRRRTGWLDAVAVRRAVQINSLSGFCLTKLDVLDGLKEIKICVGYRLPNGTEVDTTPLAAEGWEGLEPIYETMPGWSESTFGVKDHSKLPQAALNYIKRIEEVTGVPIDIISTGPDRSETMVLRDPFDA.

Residues 13 to 19 and 41 to 43 each bind GTP; these read GDEGKGK and GHT. The active-site Proton acceptor is the Asp-14. Positions 14 and 41 each coordinate Mg(2+). IMP contacts are provided by residues 14–17, 39–42, Thr-130, Arg-144, Gln-225, Thr-240, and Arg-304; these read DEGK and NAGH. The active-site Proton donor is the His-42. 300-306 is a binding site for substrate; that stretch reads ATTGRRR. GTP-binding positions include Arg-306, 332–334, and 415–417; these read KLD and STG.

Belongs to the adenylosuccinate synthetase family. As to quaternary structure, homodimer. Requires Mg(2+) as cofactor.

The protein localises to the cytoplasm. The enzyme catalyses IMP + L-aspartate + GTP = N(6)-(1,2-dicarboxyethyl)-AMP + GDP + phosphate + 2 H(+). Its pathway is purine metabolism; AMP biosynthesis via de novo pathway; AMP from IMP: step 1/2. Its function is as follows. Plays an important role in the de novo pathway of purine nucleotide biosynthesis. Catalyzes the first committed step in the biosynthesis of AMP from IMP. The chain is Adenylosuccinate synthetase from Pectobacterium carotovorum subsp. carotovorum (strain PC1).